Here is a 164-residue protein sequence, read N- to C-terminus: Respiratory growth induced protein 2 (164 aa).

Belongs to the RGI1 family.

The protein resides in the cytoplasm. Involved in the control of energetic metabolism and significantly contribute to cell fitness, especially under respiratory growth conditions. The polypeptide is Respiratory growth induced protein 2 (RGI2) (Saccharomyces cerevisiae (strain RM11-1a) (Baker's yeast)).